The following is a 1435-amino-acid chain: MGASASVLTGSKLDAWEQIRLKPGSKKKYRLKHLVWASRELERFACNPELLETAEGNEKLLQQLEPALKTGSDSLQSLWNAIVVLWCVHNRYKIGDTQQAIQKLKEVMGSRKSADAAKEDTSARQAGQNYPIVSNAQGQMVHQAISPRTLNAWVKAVEEKAFNPEIIPMFMALSEGAISYDINTMLNAIGGHQGALQVLKEVINEEAVEWDRTHPPPVGPLPPGQIREPTGSDIAGTTSTQQEQIHWTTRPNQPIPVGDIYRKWIVLGLNKMVKMYSPVSILDIKQGPKEPFRDYVDRFYKTLRAEQATQEVKNWMTETLLVQNANPDCKQILKSLGPGATLEEMMVACQGVGGPTHKARVLAEAMATAQQDLKGGYTAVFMQRGQNPIRKGTIKCFNCGKEGHIARNCRAPRKKGCWKCGQEGHQMKDCRNGKQFFRQILASGGHEARQLCAETSTPISPTDGGGSEGTGESGTERGPERALSVCLPQIPLWDRPIVTARVGGHLCEVLLDTGADDTVLNNIQLEGKWKPKMIGGIGGFIKVKEYDNVTVEIEGREVQGTVLVGPTPVNIIGRNILTGLGCTLNFPISPIAPVPVKLKPGMDGPKVKQWPLSKEKIEALTAICQEMEQEGKISRIGPENPYNTPIFAIKKKDGTKWRKLVDFRELNKRTQEFWEVQLGIPHPGGLKQKQSVTVLDVGDAYFSCPLDPDFRKYTAFTIPSVNNETPGIRYQYNVLPQGWKGSPAIFQSSMTKILDPFRRDNPELEICQYMDDLYVGSDLPLTEHRKRIELLREHLYQWGFTTPDKKHQKEPPFLWMGYELHPDKWTVQSIQLPNKDVWTVNDIQKLIGKLNWASQIYQGIRVRELCKLIRGTKSLTEVVPLSREAELELEENRERLKQPVHGVYYQPDKDLWVNIQKQGGEQWTYQIYQEEHKNLKTGKYTRQKASHTNDIRQLAEVIQKVSQESIIIWGKLPKFKLPVTRETWETWWADYWQATWIPEWEFVSTPPLIKLWYRLESEPIMGAETYYVDGAANRETKLGKAGYVTEQGKQKIIKLDETTNQKAELMAILLALQDSKETVNIVTDSQYALGVISSQPTQSESPIVQQIIEELTKKEQVYLTWVPAHKGIGGNEKIDKLVSKDIRRVLFLEGIDQAQEDHEKYHSNWKALASEFGLPPVVAKEIIASCPKCHIKGEAIHGQVDCSPEVWQIDCTHMEGKIIIVAVHVASGFIEAEVIPAETGQETAYFLLKLAARWPVKVIHTDNGPNFTSTTMKAACWWANIQHEFGIPYNPQSQGVVEAMNKELKSIIQQVRDQAEHLRTAVQMAVFVHNFKRKGGIGGYTAGERIIDILASQIQTTELQKQILKXHKFRVYYRDSRDPIWKGPAQLLWKGEGAVVIQDKGDIKVVPRRKAKIIREYGKQMAGTDSMASGQTESE.

Gly2 is lipidated: N-myristoyl glycine; by host. The segment at 7 to 31 (VLTGSKLDAWEQIRLKPGSKKKYRL) is interaction with Gp41. An interaction with host CALM1 region spans residues 8 to 43 (LTGSKLDAWEQIRLKPGSKKKYRLKHLVWASRELER). The segment at 12–19 (KLDAWEQI) is interaction with host AP3D1. Positions 14 to 33 (DAWEQIRLKPGSKKKYRLKH) are interaction with membrane phosphatidylinositol 4,5-bisphosphate and RNA. A Nuclear export signal motif is present at residues 16–22 (WEQIRLK). The Nuclear localization signal signature appears at 26 to 32 (KKKYRLK). Residues 73 to 77 (DSLQS) are interaction with membrane phosphatidylinositol 4,5-bisphosphate. Tyr130 is modified (phosphotyrosine; by host). The interaction with human PPIA/CYPA and NUP153 stretch occupies residues 187-225 (NAIGGHQGALQVLKEVINEEAVEWDRTHPPPVGPLPPGQ). A disordered region spans residues 212-232 (RTHPPPVGPLPPGQIREPTGS). Positions 276 to 362 (YSPVSILDIK…GGPTHKARVL (87 aa)) are dimerization/Multimerization of capsid protein p24. CCHC-type zinc fingers lie at residues 394–411 (IKCF…NCRA) and 415–432 (KGCW…DCRN). Positions 455–480 (TSTPISPTDGGGSEGTGESGTERGPE) are disordered. The span at 463 to 472 (DGGGSEGTGE) shows a compositional bias: gly residues. Residues 488 to 492 (PQIPL) form a dimerization of protease region. In terms of domain architecture, Peptidase A2 spans 507-576 (CEVLLDTGAD…TPVNIIGRNI (70 aa)). The For protease activity; shared with dimeric partner role is filled by Asp512. Dimerization of protease regions lie at residues 536 to 542 (GIGGFIK) and 575 to 587 (NILT…LNFP). Residues 630-820 (EGKISRIGPE…PPFLWMGYEL (191 aa)) enclose the Reverse transcriptase domain. Residues Asp696, Asp771, and Asp772 each coordinate Mg(2+). Residues 813–821 (FLWMGYELH) are RT 'primer grip'. Residues 984–1000 (WETWWADYWQATWIPEW) carry the Tryptophan repeat motif motif. An RNase H type-1 domain is found at 1020–1143 (IMGAETYYVD…IDKLVSKDIR (124 aa)). Asp1029, Glu1064, Asp1084, and Asp1135 together coordinate Mg(2+). The segment at 1149-1190 (EGIDQAQEDHEKYHSNWKALASEFGLPPVVAKEIIASCPKCH) adopts an Integrase-type zinc-finger fold. Residues His1158, His1162, Cys1186, and Cys1189 each contribute to the Zn(2+) site. Residues 1200-1350 (VDCSPEVWQI…TAGERIIDIL (151 aa)) enclose the Integrase catalytic domain. Residues Asp1210, Asp1262, and Glu1298 each coordinate Mg(2+). Residues 1369 to 1416 (FRVYYRDSRDPIWKGPAQLLWKGEGAVVIQDKGDIKVVPRRKAKIIRE) constitute a DNA-binding region (integrase-type).

In terms of assembly, homotrimer; further assembles as hexamers of trimers. Interacts with gp41 (via C-terminus). Interacts with host CALM1; this interaction induces a conformational change in the Matrix protein, triggering exposure of the myristate group. Interacts with host AP3D1; this interaction allows the polyprotein trafficking to multivesicular bodies during virus assembly. Part of the pre-integration complex (PIC) which is composed of viral genome, matrix protein, Vpr and integrase. Homodimer; the homodimer further multimerizes as homohexamers or homopentamers. Interacts with human PPIA/CYPA; This interaction stabilizes the capsid. Interacts with human NUP153. Interacts with host PDZD8; this interaction stabilizes the capsid. Interacts with monkey TRIM5; this interaction destabilizes the capsid. As to quaternary structure, homodimer, whose active site consists of two apposed aspartic acid residues. In terms of assembly, heterodimer of p66 RT and p51 RT (RT p66/p51). Heterodimerization of RT is essential for DNA polymerase activity. The overall folding of the subdomains is similar in p66 RT and p51 RT but the spatial arrangements of the subdomains are dramatically different. Homotetramer; may further associate as a homohexadecamer. Part of the pre-integration complex (PIC) which is composed of viral genome, matrix protein, Vpr and integrase. Interacts with human SMARCB1/INI1 and human PSIP1/LEDGF isoform 1. Interacts with human KPNA3; this interaction might play a role in nuclear import of the pre-integration complex. Interacts with human NUP153; this interaction might play a role in nuclear import of the pre-integration complex. Mg(2+) is required as a cofactor. In terms of processing, specific enzymatic cleavages by the viral protease yield mature proteins. The protease is released by autocatalytic cleavage. The polyprotein is cleaved during and after budding, this process is termed maturation. Proteolytic cleavage of p66 RT removes the RNase H domain to yield the p51 RT subunit. Nucleocapsid protein p7 might be further cleaved after virus entry. Tyrosine phosphorylated presumably in the virion by a host kinase. Phosphorylation is apparently not a major regulator of membrane association. Post-translationally, phosphorylated possibly by host MAPK1; this phosphorylation is necessary for Pin1-mediated virion uncoating. In terms of processing, methylated by host PRMT6, impairing its function by reducing RNA annealing and the initiation of reverse transcription.

Its subcellular location is the host cell membrane. It localises to the host endosome. It is found in the host multivesicular body. The protein localises to the virion membrane. The protein resides in the host nucleus. Its subcellular location is the host cytoplasm. It localises to the virion. The catalysed reaction is Specific for a P1 residue that is hydrophobic, and P1' variable, but often Pro.. The enzyme catalyses Endohydrolysis of RNA in RNA/DNA hybrids. Three different cleavage modes: 1. sequence-specific internal cleavage of RNA. Human immunodeficiency virus type 1 and Moloney murine leukemia virus enzymes prefer to cleave the RNA strand one nucleotide away from the RNA-DNA junction. 2. RNA 5'-end directed cleavage 13-19 nucleotides from the RNA end. 3. DNA 3'-end directed cleavage 15-20 nucleotides away from the primer terminus.. It catalyses the reaction 3'-end directed exonucleolytic cleavage of viral RNA-DNA hybrid.. It carries out the reaction DNA(n) + a 2'-deoxyribonucleoside 5'-triphosphate = DNA(n+1) + diphosphate. Its activity is regulated as follows. Protease: The viral protease is inhibited by many synthetic protease inhibitors (PIs), such as amprenavir, atazanavir, indinavir, loprinavir, nelfinavir, ritonavir and saquinavir. Use of protease inhibitors in tritherapy regimens permit more ambitious therapeutic strategies. Reverse transcriptase/ribonuclease H: RT can be inhibited either by nucleoside RT inhibitors (NRTIs) or by non nucleoside RT inhibitors (NNRTIs). NRTIs act as chain terminators, whereas NNRTIs inhibit DNA polymerization by binding a small hydrophobic pocket near the RT active site and inducing an allosteric change in this region. Classical NRTIs are abacavir, adefovir (PMEA), didanosine (ddI), lamivudine (3TC), stavudine (d4T), tenofovir (PMPA), zalcitabine (ddC), and zidovudine (AZT). Classical NNRTIs are atevirdine (BHAP U-87201E), delavirdine, efavirenz (DMP-266), emivirine (I-EBU), and nevirapine (BI-RG-587). The tritherapies used as a basic effective treatment of AIDS associate two NRTIs and one NNRTI. Its function is as follows. Mediates, with Gag polyprotein, the essential events in virion assembly, including binding the plasma membrane, making the protein-protein interactions necessary to create spherical particles, recruiting the viral Env proteins, and packaging the genomic RNA via direct interactions with the RNA packaging sequence (Psi). Gag-Pol polyprotein may regulate its own translation, by the binding genomic RNA in the 5'-UTR. At low concentration, the polyprotein would promote translation, whereas at high concentration, the polyprotein would encapsidate genomic RNA and then shut off translation. In terms of biological role, targets the polyprotein to the plasma membrane via a multipartite membrane-binding signal, that includes its myristoylated N-terminus. Matrix protein is part of the pre-integration complex. Implicated in the release from host cell mediated by Vpu. Binds to RNA. Forms the conical core that encapsulates the genomic RNA-nucleocapsid complex in the virion. Most core are conical, with only 7% tubular. The core is constituted by capsid protein hexamer subunits. The core is disassembled soon after virion entry. Host restriction factors such as TRIM5-alpha or TRIMCyp bind retroviral capsids and cause premature capsid disassembly, leading to blocks in reverse transcription. Capsid restriction by TRIM5 is one of the factors which restricts HIV-1 to the human species. Host PIN1 apparently facilitates the virion uncoating. On the other hand, interactions with PDZD8 or CYPA stabilize the capsid. Functionally, encapsulates and protects viral dimeric unspliced genomic RNA (gRNA). Binds these RNAs through its zinc fingers. Acts as a nucleic acid chaperone which is involved in rearangement of nucleic acid secondary structure during gRNA retrotranscription. Also facilitates template switch leading to recombination. As part of the polyprotein, participates in gRNA dimerization, packaging, tRNA incorporation and virion assembly. Its function is as follows. Aspartyl protease that mediates proteolytic cleavages of Gag and Gag-Pol polyproteins during or shortly after the release of the virion from the plasma membrane. Cleavages take place as an ordered, step-wise cascade to yield mature proteins. This process is called maturation. Displays maximal activity during the budding process just prior to particle release from the cell. Also cleaves Nef and Vif, probably concomitantly with viral structural proteins on maturation of virus particles. Hydrolyzes host EIF4GI and PABP1 in order to shut off the capped cellular mRNA translation. The resulting inhibition of cellular protein synthesis serves to ensure maximal viral gene expression and to evade host immune response. Also mediates cleavage of host YTHDF3. Mediates cleavage of host CARD8, thereby activating the CARD8 inflammasome, leading to the clearance of latent HIV-1 in patient CD4(+) T-cells after viral reactivation; in contrast, HIV-1 can evade CARD8-sensing when its protease remains inactive in infected cells prior to viral budding. In terms of biological role, multifunctional enzyme that converts the viral RNA genome into dsDNA in the cytoplasm, shortly after virus entry into the cell. This enzyme displays a DNA polymerase activity that can copy either DNA or RNA templates, and a ribonuclease H (RNase H) activity that cleaves the RNA strand of RNA-DNA heteroduplexes in a partially processive 3' to 5' endonucleasic mode. Conversion of viral genomic RNA into dsDNA requires many steps. A tRNA(3)-Lys binds to the primer-binding site (PBS) situated at the 5'-end of the viral RNA. RT uses the 3' end of the tRNA primer to perform a short round of RNA-dependent minus-strand DNA synthesis. The reading proceeds through the U5 region and ends after the repeated (R) region which is present at both ends of viral RNA. The portion of the RNA-DNA heteroduplex is digested by the RNase H, resulting in a ssDNA product attached to the tRNA primer. This ssDNA/tRNA hybridizes with the identical R region situated at the 3' end of viral RNA. This template exchange, known as minus-strand DNA strong stop transfer, can be either intra- or intermolecular. RT uses the 3' end of this newly synthesized short ssDNA to perform the RNA-dependent minus-strand DNA synthesis of the whole template. RNase H digests the RNA template except for two polypurine tracts (PPTs) situated at the 5'-end and near the center of the genome. It is not clear if both polymerase and RNase H activities are simultaneous. RNase H probably can proceed both in a polymerase-dependent (RNA cut into small fragments by the same RT performing DNA synthesis) and a polymerase-independent mode (cleavage of remaining RNA fragments by free RTs). Secondly, RT performs DNA-directed plus-strand DNA synthesis using the PPTs that have not been removed by RNase H as primers. PPTs and tRNA primers are then removed by RNase H. The 3' and 5' ssDNA PBS regions hybridize to form a circular dsDNA intermediate. Strand displacement synthesis by RT to the PBS and PPT ends produces a blunt ended, linear dsDNA copy of the viral genome that includes long terminal repeats (LTRs) at both ends. Catalyzes viral DNA integration into the host chromosome, by performing a series of DNA cutting and joining reactions. This enzyme activity takes place after virion entry into a cell and reverse transcription of the RNA genome in dsDNA. The first step in the integration process is 3' processing. This step requires a complex comprising the viral genome, matrix protein, Vpr and integrase. This complex is called the pre-integration complex (PIC). The integrase protein removes 2 nucleotides from each 3' end of the viral DNA, leaving recessed CA OH's at the 3' ends. In the second step, the PIC enters cell nucleus. This process is mediated through integrase and Vpr proteins, and allows the virus to infect a non dividing cell. This ability to enter the nucleus is specific of lentiviruses, other retroviruses cannot and rely on cell division to access cell chromosomes. In the third step, termed strand transfer, the integrase protein joins the previously processed 3' ends to the 5' ends of strands of target cellular DNA at the site of integration. The 5'-ends are produced by integrase-catalyzed staggered cuts, 5 bp apart. A Y-shaped, gapped, recombination intermediate results, with the 5'-ends of the viral DNA strands and the 3' ends of target DNA strands remaining unjoined, flanking a gap of 5 bp. The last step is viral DNA integration into host chromosome. This involves host DNA repair synthesis in which the 5 bp gaps between the unjoined strands are filled in and then ligated. Since this process occurs at both cuts flanking the HIV genome, a 5 bp duplication of host DNA is produced at the ends of HIV-1 integration. Alternatively, Integrase may catalyze the excision of viral DNA just after strand transfer, this is termed disintegration. This chain is Gag-Pol polyprotein (gag-pol), found in Human immunodeficiency virus type 1 group O (isolate ANT70) (HIV-1).